Here is a 473-residue protein sequence, read N- to C-terminus: Asparagine--tRNA ligase (473 aa).

The protein belongs to the class-II aminoacyl-tRNA synthetase family. As to quaternary structure, homodimer.

The protein resides in the cytoplasm. The enzyme catalyses tRNA(Asn) + L-asparagine + ATP = L-asparaginyl-tRNA(Asn) + AMP + diphosphate + H(+). The polypeptide is Asparagine--tRNA ligase (Treponema denticola (strain ATCC 35405 / DSM 14222 / CIP 103919 / JCM 8153 / KCTC 15104)).